A 421-amino-acid polypeptide reads, in one-letter code: UDP-N-acetylglucosamine 1-carboxyvinyltransferase (421 aa).

22–23 lines the phosphoenolpyruvate pocket; sequence KN. Residue Arg-92 coordinates UDP-N-acetyl-alpha-D-glucosamine. Asp-116 acts as the Proton donor in catalysis. Residues 121-125, Asp-307, and Ile-330 each bind UDP-N-acetyl-alpha-D-glucosamine; that span reads RPIDQ.

This sequence belongs to the EPSP synthase family. MurA subfamily.

Its subcellular location is the cytoplasm. The enzyme catalyses phosphoenolpyruvate + UDP-N-acetyl-alpha-D-glucosamine = UDP-N-acetyl-3-O-(1-carboxyvinyl)-alpha-D-glucosamine + phosphate. It functions in the pathway cell wall biogenesis; peptidoglycan biosynthesis. Functionally, cell wall formation. Adds enolpyruvyl to UDP-N-acetylglucosamine. The sequence is that of UDP-N-acetylglucosamine 1-carboxyvinyltransferase from Lactobacillus johnsonii (strain CNCM I-12250 / La1 / NCC 533).